The primary structure comprises 322 residues: uncharacterized protein (322 aa).

Positions 205–286 (QEIKNAHAAL…LKKAISEAVQ (82 aa)) form a coiled coil. Basic and acidic residues-rich tracts occupy residues 254–281 (EKEEELNKKDKEKEEETEKEGEKLKKAI) and 290–299 (DRIEAIEKSR). The disordered stretch occupies residues 254-322 (EKEEELNKKD…VQKSIWSGLF (69 aa)). Positions 310–322 (SEQVQKSIWSGLF) are enriched in polar residues.

This sequence to B.subtilis XkdF.

This is an uncharacterized protein from Bacillus subtilis (strain 168).